A 417-amino-acid polypeptide reads, in one-letter code: mRNA cap guanine-N(7) methyltransferase (417 aa).

Residues 129–412 (SPIIKLRNFN…LYTVFAFKKV (284 aa)) form the mRNA cap 0 methyltransferase domain. 138–139 (NN) serves as a coordination point for mRNA. S-adenosyl-L-methionine is bound by residues Lys-142, Gly-160, Asp-182, Asp-211, Gln-237, and Tyr-242.

It belongs to the class I-like SAM-binding methyltransferase superfamily. mRNA cap 0 methyltransferase family.

The protein resides in the nucleus. The catalysed reaction is a 5'-end (5'-triphosphoguanosine)-ribonucleoside in mRNA + S-adenosyl-L-methionine = a 5'-end (N(7)-methyl 5'-triphosphoguanosine)-ribonucleoside in mRNA + S-adenosyl-L-homocysteine. In terms of biological role, responsible for methylating the 5'-cap structure of mRNAs. This is mRNA cap guanine-N(7) methyltransferase (ABD1) from Candida glabrata (strain ATCC 2001 / BCRC 20586 / JCM 3761 / NBRC 0622 / NRRL Y-65 / CBS 138) (Yeast).